The primary structure comprises 498 residues: Glycerol kinase (498 aa).

T12 serves as a coordination point for ADP. 3 residues coordinate ATP: T12, T13, and S14. A sn-glycerol 3-phosphate-binding site is contributed by T12. R16 serves as a coordination point for ADP. The sn-glycerol 3-phosphate site is built by R82, E83, and Y134. Glycerol-binding residues include R82, E83, and Y134. At H230 the chain carries Phosphohistidine; by HPr. Sn-glycerol 3-phosphate is bound at residue D244. Glycerol-binding residues include D244 and Q245. Positions 266 and 309 each coordinate ADP. ATP is bound by residues T266, G309, Q313, and G410. ADP-binding residues include G410 and N414.

It belongs to the FGGY kinase family. As to quaternary structure, homotetramer and homodimer (in equilibrium). The phosphoenolpyruvate-dependent sugar phosphotransferase system (PTS), including enzyme I, and histidine-containing protein (HPr) are required for the phosphorylation, which leads to the activation of the enzyme.

It carries out the reaction glycerol + ATP = sn-glycerol 3-phosphate + ADP + H(+). Its pathway is polyol metabolism; glycerol degradation via glycerol kinase pathway; sn-glycerol 3-phosphate from glycerol: step 1/1. Its activity is regulated as follows. Activated by phosphorylation and inhibited by fructose 1,6-bisphosphate (FBP). In terms of biological role, key enzyme in the regulation of glycerol uptake and metabolism. Catalyzes the phosphorylation of glycerol to yield sn-glycerol 3-phosphate. The protein is Glycerol kinase of Staphylococcus aureus (strain MSSA476).